A 270-amino-acid chain; its full sequence is NAD kinase (270 aa).

The Proton acceptor role is filled by D49. NAD(+) contacts are provided by residues 49-50 (DG), R54, 126-127 (NE), R152, D154, 165-170 (TAYNKS), A189, and Q227.

This sequence belongs to the NAD kinase family. A divalent metal cation serves as cofactor.

Its subcellular location is the cytoplasm. It catalyses the reaction NAD(+) + ATP = ADP + NADP(+) + H(+). Involved in the regulation of the intracellular balance of NAD and NADP, and is a key enzyme in the biosynthesis of NADP. Catalyzes specifically the phosphorylation on 2'-hydroxyl of the adenosine moiety of NAD to yield NADP. The protein is NAD kinase of Lactococcus lactis subsp. cremoris (strain SK11).